The following is a 122-amino-acid chain: uncharacterized protein (122 aa).

An N-terminal signal peptide occupies residues 1-22 (MNMMRIFYIGLSGVGMMFSSMA).

This is an uncharacterized protein from Escherichia coli (strain K12).